We begin with the raw amino-acid sequence, 309 residues long: Taste receptor type 2 member 46 (309 aa).

Position 1 (methionine 1) is a topological domain, extracellular. The chain crosses the membrane as a helical span at residues isoleucine 2 to phenylalanine 22. The Cytoplasmic segment spans residues alanine 23–glutamine 46. Residues isoleucine 47 to tyrosine 67 form a helical membrane-spanning segment. Over alanine 68–asparagine 86 the chain is Extracellular. A helical membrane pass occupies residues valine 87–leucine 107. The Cytoplasmic segment spans residues leucine 108–lysine 126. Residues serine 127–isoleucine 147 form a helical membrane-spanning segment. The Extracellular portion of the chain corresponds to asparagine 148–threonine 178. Asparagine 161 and asparagine 176 each carry an N-linked (GlcNAc...) asparagine glycan. The chain crosses the membrane as a helical span at residues valine 179 to isoleucine 199. Over cysteine 200–glutamine 229 the chain is Cytoplasmic. A helical membrane pass occupies residues threonine 230–tryptophan 250. The Extracellular segment spans residues serine 251–proline 259. Residues valine 260 to isoleucine 280 form a helical membrane-spanning segment. The Cytoplasmic segment spans residues tryptophan 281 to serine 309.

The protein belongs to the G-protein coupled receptor T2R family. As to expression, expressed in subsets of taste receptor cells of the tongue and exclusively in gustducin-positive cells. Expressed on ciliated airway epithelium.

Its subcellular location is the membrane. The protein resides in the cell projection. It is found in the cilium membrane. Receptor that may play a role in the perception of bitterness and is gustducin-linked. May play a role in sensing the chemical composition of the gastrointestinal content. The activity of this receptor may stimulate alpha gustducin, mediate PLC-beta-2 activation and lead to the gating of TRPM5. In airway epithelial cells, binding of bitter compounds increases the intracellular calcium ion concentration and stimulates ciliary beat frequency. The polypeptide is Taste receptor type 2 member 46 (TAS2R46) (Homo sapiens (Human)).